A 430-amino-acid chain; its full sequence is Potassium channel subfamily K member 12 (430 aa).

The Cytoplasmic portion of the chain corresponds to 1 to 38 (MSSRSPRPPPRRCRRRLPRPSCCCCCCRRSHLNEDTGR). Residues 11 to 16 (RRCRRR) form an ER retention/retrieval signal region. A helical membrane pass occupies residues 39–59 (FVLLAALIGLYLVAGATVFSA). N-linked (GlcNAc...) asparagine glycosylation occurs at N78. Residues 114–134 (WDFPGAFYFVGTVVSTIGFGM) constitute an intramembrane region (pore-forming). Residues T129, I130, and G131 each coordinate K(+). The selectivity filter 1 stretch occupies residues 129–134 (TIGFGM). The helical transmembrane segment at 145–165 (FLIAYGLFGCAGTILFFNLFL) threads the bilayer. Topologically, residues 166–212 (ERIISLLAFIMRACRERQLRRSGLLPATFRRGSALSEADSLAGWKPS) are cytoplasmic. A helical transmembrane segment spans residues 213 to 233 (VYHVLLILGLFAVLLACCASA). The pore-forming intramembrane region spans 243-263 (YVDSLYFCFVTFSTIGFGDLV). K(+)-binding residues include T256, I257, G258, and F259. The interval 256-261 (TIGFGD) is selectivity filter 2. The chain crosses the membrane as a helical span at residues 282-302 (LFILLGVCCIYSLFNVISILI). The Cytoplasmic segment spans residues 303-430 (KQVLNWMLRK…NRLAETSASR (128 aa)).

The protein belongs to the two pore domain potassium channel (TC 1.A.1.8) family. Homodimer. Heterodimer with KCNK13. In terms of tissue distribution, highly expressed in most brain regions. Also expressed in other tissues such as lung, kidney, liver, stomach and spleen.

It localises to the cell membrane. It is found in the endoplasmic reticulum membrane. The catalysed reaction is K(+)(in) = K(+)(out). Functionally, k(+) channel subunit that may homo- and heterodimerize to form functional channels with distinct regulatory and gating properties. Can heterodimerize with KCNK13 subunit to conduct K(+) outward rectifying currents at the plasma membrane. The homodimers are mainly retained in the endoplasmic reticulum compartment and may be targeted to the cell surface upon phosphorylation or other activation signals yet to be elucidated. This Rattus norvegicus (Rat) protein is Potassium channel subfamily K member 12 (Kcnk12).